The chain runs to 159 residues: Transcription elongation factor GreA (159 aa).

Positions 44–75 (SENAEYDAAREQQSQTEARIADLESKLSSATI) form a coiled coil.

This sequence belongs to the GreA/GreB family.

Functionally, necessary for efficient RNA polymerase transcription elongation past template-encoded arresting sites. The arresting sites in DNA have the property of trapping a certain fraction of elongating RNA polymerases that pass through, resulting in locked ternary complexes. Cleavage of the nascent transcript by cleavage factors such as GreA or GreB allows the resumption of elongation from the new 3'terminus. GreA releases sequences of 2 to 3 nucleotides. The polypeptide is Transcription elongation factor GreA (Chlorobium phaeovibrioides (strain DSM 265 / 1930) (Prosthecochloris vibrioformis (strain DSM 265))).